A 307-amino-acid chain; its full sequence is UDP-N-acetylenolpyruvoylglucosamine reductase (307 aa).

The FAD-binding PCMH-type domain occupies 33-197 (TGGNADFYIT…LEAAFTLAPG (165 aa)). The active site involves arginine 176. Serine 226 functions as the Proton donor in the catalytic mechanism. Glutamate 296 is an active-site residue.

It belongs to the MurB family. It depends on FAD as a cofactor.

The protein localises to the cytoplasm. It catalyses the reaction UDP-N-acetyl-alpha-D-muramate + NADP(+) = UDP-N-acetyl-3-O-(1-carboxyvinyl)-alpha-D-glucosamine + NADPH + H(+). The protein operates within cell wall biogenesis; peptidoglycan biosynthesis. In terms of biological role, cell wall formation. This is UDP-N-acetylenolpyruvoylglucosamine reductase from Staphylococcus aureus (strain MRSA252).